Consider the following 171-residue polypeptide: Lipoprotein signal peptidase (171 aa).

The next 3 membrane-spanning stretches (helical) occupy residues 8–28 (SFLWLSAVAFVIDLLTKYIVV), 64–84 (WQQYFFILLALAISGMLVYFL), and 99–119 (ALIIGGALANMVDRAYNGFVV). Active-site residues include D120 and D138. Residues 133 to 153 (VFNIADIAICIGAGLLVLDAF) form a helical membrane-spanning segment.

The protein belongs to the peptidase A8 family.

Its subcellular location is the cell inner membrane. The enzyme catalyses Release of signal peptides from bacterial membrane prolipoproteins. Hydrolyzes -Xaa-Yaa-Zaa-|-(S,diacylglyceryl)Cys-, in which Xaa is hydrophobic (preferably Leu), and Yaa (Ala or Ser) and Zaa (Gly or Ala) have small, neutral side chains.. It functions in the pathway protein modification; lipoprotein biosynthesis (signal peptide cleavage). This protein specifically catalyzes the removal of signal peptides from prolipoproteins. This chain is Lipoprotein signal peptidase, found in Haemophilus influenzae (strain ATCC 51907 / DSM 11121 / KW20 / Rd).